The following is a 143-amino-acid chain: TTLSDKDKSTVKALWGKISKSADAIGADALGRMLAVYPQTKTYFSHWPDMSPGSGPVKAHGKKVMGGVALAVTKIDDLTTGLGDLSELHAFKMRVDPSNFKILSHCILVVVAKMFPKEFTPDAHVSLDKFLASVALALAERYR.

The Globin domain maps to 2–143; the sequence is TLSDKDKSTV…VALALAERYR (142 aa). H60 serves as a coordination point for O2. H89 contributes to the heme b binding site.

This sequence belongs to the globin family. As to quaternary structure, heterotetramer of two alpha chains and two beta chains. Red blood cells.

Functionally, involved in oxygen transport from gills to the various peripheral tissues. The polypeptide is Hemoglobin subunit alpha (hba) (Thunnus thynnus (Atlantic bluefin tuna)).